Here is a 303-residue protein sequence, read N- to C-terminus: Methionyl-tRNA formyltransferase (303 aa).

A (6S)-5,6,7,8-tetrahydrofolate-binding site is contributed by 110-113 (SLLP).

The protein belongs to the Fmt family.

It carries out the reaction L-methionyl-tRNA(fMet) + (6R)-10-formyltetrahydrofolate = N-formyl-L-methionyl-tRNA(fMet) + (6S)-5,6,7,8-tetrahydrofolate + H(+). Functionally, attaches a formyl group to the free amino group of methionyl-tRNA(fMet). The formyl group appears to play a dual role in the initiator identity of N-formylmethionyl-tRNA by promoting its recognition by IF2 and preventing the misappropriation of this tRNA by the elongation apparatus. The sequence is that of Methionyl-tRNA formyltransferase from Ehrlichia ruminantium (strain Welgevonden).